The primary structure comprises 714 residues: Methyl-accepting chemotaxis protein TlpQ (714 aa).

A helical transmembrane segment spans residues 12–32 (ITLLAGLCLLGVVALLVGLSV). The Cache domain occupies 50–290 (LDESARLRLE…LLGKNLAKAD (241 aa)). Histamine-binding positions include glutamate 170, 208 to 210 (YFD), and aspartate 239. Residues 360–380 (TWVELGLGLGAAVLGLLVLWL) traverse the membrane as a helical segment. An HAMP domain is found at 383-437 (RGVTRPILGVAHMLRDIASGEGDLTQRLPHTGRDELGELAGWFNRFLDKLQPIIR). One can recognise a Methyl-accepting transducer domain in the interval 442–678 (SVRDARSTAD…EINRNVAAIR (237 aa)).

The protein belongs to the methyl-accepting chemotaxis (MCP) protein family. As to quaternary structure, homotetramer.

The protein localises to the cell membrane. Chemotactic-signal transducers respond to changes in the concentration of attractants and repellents in the environment, transduce a signal from the outside to the inside of the cell, and facilitate sensory adaptation through the variation of the level of methylation. TlpQ is a chemoreceptor that binds and mediates chemotaxis to histamine, a key biological signaling molecule. It binds histamine with high affinity, which permits responses to very low histamine concentrations. Chemotaxis to histamine may play a role in the virulence of P.aeruginosa by recruiting cells at the infection site and consequently modulating the expression of quorum-sensing-dependent virulence genes. TlpQ also binds and mediates chemotaxis to polyamines such as putrescine, spermidine, cadaverine, agmatine and ethylenediamine. In addition, binds the quorum-sensing signal autoinducer 2 (AI-2), thus inducing chemotaxis toward AI-2 and biofilm formation. The protein is Methyl-accepting chemotaxis protein TlpQ of Pseudomonas aeruginosa (strain ATCC 15692 / DSM 22644 / CIP 104116 / JCM 14847 / LMG 12228 / 1C / PRS 101 / PAO1).